A 695-amino-acid chain; its full sequence is DNA ligase (695 aa).

NAD(+) contacts are provided by residues 44–48, 93–94, and Glu-123; these read DAEYD and SL. The N6-AMP-lysine intermediate role is filled by Lys-125. The NAD(+) site is built by Arg-146, Glu-184, Lys-300, and Lys-324. Zn(2+) contacts are provided by Cys-418, Cys-421, Cys-436, and Cys-442. The BRCT domain maps to 605–694; the sequence is SAAKPLAGIT…PDAARSMAQR (90 aa).

This sequence belongs to the NAD-dependent DNA ligase family. LigA subfamily. Mg(2+) is required as a cofactor. The cofactor is Mn(2+).

The catalysed reaction is NAD(+) + (deoxyribonucleotide)n-3'-hydroxyl + 5'-phospho-(deoxyribonucleotide)m = (deoxyribonucleotide)n+m + AMP + beta-nicotinamide D-nucleotide.. DNA ligase that catalyzes the formation of phosphodiester linkages between 5'-phosphoryl and 3'-hydroxyl groups in double-stranded DNA using NAD as a coenzyme and as the energy source for the reaction. It is essential for DNA replication and repair of damaged DNA. In Acidothermus cellulolyticus (strain ATCC 43068 / DSM 8971 / 11B), this protein is DNA ligase.